The chain runs to 193 residues: PBAN-type neuropeptides (193 aa).

Residues 1–19 (MYGAVLPGLFFIFISCVVA) form the signal peptide. I46 carries the post-translational modification Isoleucine amide. A leucine amide mark is found at L102 and L122. The disordered stretch occupies residues 124–158 (RRLADDTPATPADQEMYRPDPEQIDSRTKYFSPRL). Residues 138-151 (EMYRPDPEQIDSRT) are compositionally biased toward basic and acidic residues. Residues L158 and L168 each carry the leucine amide modification. Positions 186–193 (STNKTQST) are excised as a propeptide.

It belongs to the pyrokinin family. Expressed in the mandibular, maxillary and labial neuromeres of the male and female brain-subesophageal ganglions, in the corpora cardiaca and all around the corpora allata, and at a lower level in the brain near the calyx and pedunculus of the mushroom body (at protein level). Expressed in larvae and adult of both sexes (at protein level). In terms of tissue distribution, expressed in corpora cardiaca (CC), corpora allata (CA) and gnathal ganglion (GNG) (at protein level). Expression in CC and CA detected in most animals, in GNG in some (at protein level). As to expression, expression not detected in CC, CA, AL or GNG (at protein level). Expressed in corpora cardiaca (CC), corpora allata (CA), antennal lobe (AL) and gnathal ganglion (GNG) (at protein level). Expression in CC, CA and GNG detected in most animals, expression in AL detected in few (at protein level). In terms of tissue distribution, expressed in corpora cardiaca (CC), corpora allata (CA), antennal lobe (AL) and gnathal ganglion (GNG) (at protein level). Expression in CC, CA and GNG detected in all animals, expression in AL detected in some (at protein level). As to expression, expressed in corpora cardiaca (CC), corpora allata (CA), antennal lobe (AL) and gnathal ganglion (GNG) (at protein level). Expression in CC, CA and GNG detected in most animals, expression in AL detected in some animals (at protein level).

It is found in the secreted. In terms of biological role, a hormone that controls sex pheromone production in female moths and pheromone responsiveness in male. The chain is PBAN-type neuropeptides from Agrotis ipsilon (Black cutworm moth).